The chain runs to 182 residues: Large ribosomal subunit protein uL6 (182 aa).

This sequence belongs to the universal ribosomal protein uL6 family. In terms of assembly, part of the 50S ribosomal subunit.

This protein binds to the 23S rRNA, and is important in its secondary structure. It is located near the subunit interface in the base of the L7/L12 stalk, and near the tRNA binding site of the peptidyltransferase center. The sequence is that of Large ribosomal subunit protein uL6 from Dehalococcoides mccartyi (strain ATCC BAA-2100 / JCM 16839 / KCTC 5957 / BAV1).